The primary structure comprises 3169 residues: FRAS1-related extracellular matrix protein 2 (3169 aa).

A disordered region spans residues 1-24 (MHSAGTPGLSSRRTGNSTSFQPGP). The signal sequence occupies residues 1–46 (MHSAGTPGLSSRRTGNSTSFQPGPPPPPRLLLLLLLLLSLVSRVPA). Polar residues predominate over residues 8-21 (GLSSRRTGNSTSFQ). Residues 47–3113 (QPAAFGRALL…SPSSAVSLVT (3067 aa)) lie on the Extracellular side of the membrane. CSPG repeat units lie at residues 319–413 (KPSF…LELE), 438–537 (APVV…LRMV), 560–675 (PPVL…FRVQ), 700–807 (PPEL…FQVE), 828–919 (QPPE…LEVS), 945–1037 (HPTG…LSLS), 1066–1168 (APEI…FRCS), 1189–1282 (EQPE…IKLT), 1303–1399 (TPRM…FDVT), 1420–1512 (VFPD…FQVT), 1532–1621 (KKPV…FTVT), and 1655–1752 (VPQI…FAVE). Asparagine 358 carries N-linked (GlcNAc...) asparagine glycosylation. N-linked (GlcNAc...) asparagine glycans are attached at residues asparagine 1244 and asparagine 1369. N-linked (GlcNAc...) asparagine glycosylation is found at asparagine 1584 and asparagine 1741. 5 Calx-beta domains span residues 1759–1858 (LTYQ…VVLS), 1871–1982 (ATVE…VLLS), 1997–2103 (QVTI…LVLR), 2118–2220 (VSIN…LVLG), and 2238–2342 (TLIR…VHLK). Residues 3036 to 3057 (SLVSQGKPQSTTKSRKKREIRS) are disordered. The span at 3037 to 3047 (LVSQGKPQSTT) shows a compositional bias: polar residues. Residues 3114–3134 (VVGGTTVGLLTICLTVIAVLM) form a helical membrane-spanning segment. The Cytoplasmic segment spans residues 3135–3169 (CRGKESFRGKDAPKGSSSSEPMVPPQSHHNDSSEV). The tract at residues 3141-3169 (FRGKDAPKGSSSSEPMVPPQSHHNDSSEV) is disordered.

This sequence belongs to the FRAS1 family. As to quaternary structure, interacts with FREM1.

The protein localises to the cell membrane. Functionally, extracellular matrix protein required for maintenance of the integrity of the skin epithelium and for maintenance of renal epithelia. Required for epidermal adhesion. Involved in the development of eyelids and the anterior segment of the eyeballs. This Homo sapiens (Human) protein is FRAS1-related extracellular matrix protein 2 (FREM2).